The sequence spans 463 residues: L-seryl-tRNA(Sec) selenium transferase (463 aa).

Lysine 295 is subject to N6-(pyridoxal phosphate)lysine.

This sequence belongs to the SelA family. Homodecamer; pentamer of dimers. Binds only one seryl-tRNA(Sec) per dimer. Requires pyridoxal 5'-phosphate as cofactor.

Its subcellular location is the cytoplasm. The enzyme catalyses L-seryl-tRNA(Sec) + selenophosphate + H(+) = L-selenocysteinyl-tRNA(Sec) + phosphate. It functions in the pathway aminoacyl-tRNA biosynthesis; selenocysteinyl-tRNA(Sec) biosynthesis; selenocysteinyl-tRNA(Sec) from L-seryl-tRNA(Sec) (bacterial route): step 1/1. Its function is as follows. Converts seryl-tRNA(Sec) to selenocysteinyl-tRNA(Sec) required for selenoprotein biosynthesis. This is L-seryl-tRNA(Sec) selenium transferase from Escherichia coli O17:K52:H18 (strain UMN026 / ExPEC).